Here is a 113-residue protein sequence, read N- to C-terminus: Fruiting body-specific class I hydrophobin fbh1 (113 aa).

A signal peptide spans methionine 1–alanine 20. 4 disulfides stabilise this stretch: cysteine 33/cysteine 92, cysteine 40/cysteine 86, cysteine 41/cysteine 73, and cysteine 93/cysteine 106.

Belongs to the fungal hydrophobin family. Self-assembles to form functional amyloid fibrils called rodlets. Self-assembly into fibrillar rodlets occurs spontaneously at hydrophobic:hydrophilic interfaces and the rodlets further associate laterally to form amphipathic monolayers.

It is found in the secreted. It localises to the cell wall. Functionally, aerial growth, conidiation, and dispersal of filamentous fungi in the environment rely upon a capability of their secreting small amphipathic proteins called hydrophobins (HPBs) with low sequence identity. Class I can self-assemble into an outermost layer of rodlet bundles on aerial cell surfaces, conferring cellular hydrophobicity that supports fungal growth, development and dispersal; whereas Class II form highly ordered films at water-air interfaces through intermolecular interactions but contribute nothing to the rodlet structure. Fbh1 is a fruiting body-specific class I hydrophobin that is involved in the growth rate and primordia formation. This is Fruiting body-specific class I hydrophobin fbh1 from Pleurotus ostreatus (strain PC15) (Oyster mushroom).